We begin with the raw amino-acid sequence, 257 residues long: MPARRPFIGGNFKCNGSLDFIKSHVASIASYKIPESVDVVVAPSFVHLSTAIAANTSKCLKIAAQNVYLEGNGAWTGETSVEMLLDMGLSHVIIGHSERRRIMGETNEQSAKKAKRALDKGMTVIFCTGETLDERKANNTMEVNIAQLEALKKEIGESKKLWENVVIAYEPVWSIGTGVVATPEQAEEVHVGLRKWFAEKVCAEGAQHIRIIYGGSANGSNCEKLGQCPNIDGFLVGGASLKPEFTTMIDILAKTRA.

Substrate is bound by residues N11 and K13. The Electrophile role is filled by H96. Residue E170 is the Proton acceptor of the active site.

The protein belongs to the triosephosphate isomerase family. As to quaternary structure, homodimer.

The catalysed reaction is D-glyceraldehyde 3-phosphate = dihydroxyacetone phosphate. Its pathway is carbohydrate biosynthesis; gluconeogenesis. It participates in carbohydrate degradation; glycolysis; D-glyceraldehyde 3-phosphate from glycerone phosphate: step 1/1. The polypeptide is Triosephosphate isomerase (Giardia intestinalis (Giardia lamblia)).